Consider the following 180-residue polypeptide: Large ribosomal subunit protein uL5 (180 aa).

Belongs to the universal ribosomal protein uL5 family. As to quaternary structure, part of the 50S ribosomal subunit; part of the 5S rRNA/L5/L18/L25 subcomplex. Contacts the 5S rRNA and the P site tRNA. Forms a bridge to the 30S subunit in the 70S ribosome.

Its function is as follows. This is one of the proteins that bind and probably mediate the attachment of the 5S RNA into the large ribosomal subunit, where it forms part of the central protuberance. In the 70S ribosome it contacts protein S13 of the 30S subunit (bridge B1b), connecting the 2 subunits; this bridge is implicated in subunit movement. Contacts the P site tRNA; the 5S rRNA and some of its associated proteins might help stabilize positioning of ribosome-bound tRNAs. The protein is Large ribosomal subunit protein uL5 of Anaeromyxobacter dehalogenans (strain 2CP-1 / ATCC BAA-258).